We begin with the raw amino-acid sequence, 303 residues long: Cytosolic Fe-S cluster assembly factor CFD1 (303 aa).

Gly-15–Ser-22 serves as a coordination point for ATP. Cys-199 and Cys-202 together coordinate [4Fe-4S] cluster.

The protein belongs to the Mrp/NBP35 ATP-binding proteins family. NUBP2/CFD1 subfamily. Heterotetramer of 2 NBP35 and 2 CFD1 chains. [4Fe-4S] cluster is required as a cofactor.

It is found in the cytoplasm. In terms of biological role, component of the cytosolic iron-sulfur (Fe/S) protein assembly (CIA) machinery. Required for maturation of extramitochondrial Fe-S proteins. The NBP35-CFD1 heterotetramer forms a Fe-S scaffold complex, mediating the de novo assembly of an Fe-S cluster and its transfer to target apoproteins. The polypeptide is Cytosolic Fe-S cluster assembly factor CFD1 (Chaetomium globosum (strain ATCC 6205 / CBS 148.51 / DSM 1962 / NBRC 6347 / NRRL 1970) (Soil fungus)).